A 241-amino-acid chain; its full sequence is ATP synthase subunit a (241 aa).

Helical transmembrane passes span 23–43 (VSFTNSSLLMLLTVGLAAAFF), 83–103 (YFPYILTLFVFVFLGNMLGML), 113–133 (IAVTAALAVGIFIAVTIIGFA), 188–208 (VLAGFVIMLGVVGGVVPFAVV), and 209–229 (LGVTVLEFFIAALQAYVFTIL).

It belongs to the ATPase A chain family. As to quaternary structure, F-type ATPases have 2 components, CF(1) - the catalytic core - and CF(0) - the membrane proton channel. CF(1) has five subunits: alpha(3), beta(3), gamma(1), delta(1), epsilon(1). CF(0) has four main subunits: a, b, b' and c.

The protein resides in the cell inner membrane. Functionally, key component of the proton channel; it plays a direct role in the translocation of protons across the membrane. The sequence is that of ATP synthase subunit a from Rhodospirillum rubrum (strain ATCC 11170 / ATH 1.1.1 / DSM 467 / LMG 4362 / NCIMB 8255 / S1).